The following is a 408-amino-acid chain: LL-diaminopimelate aminotransferase (408 aa).

The substrate site is built by Tyr15 and Gly42. Residues Tyr72, 108–109 (SK), Tyr132, Asn187, Tyr218, and 246–248 (SFS) each bind pyridoxal 5'-phosphate. Substrate-binding residues include Lys109, Tyr132, and Asn187. Lys249 carries the post-translational modification N6-(pyridoxal phosphate)lysine. Arg257 and Asn292 together coordinate pyridoxal 5'-phosphate. Substrate contacts are provided by Asn292 and Arg388.

The protein belongs to the class-I pyridoxal-phosphate-dependent aminotransferase family. LL-diaminopimelate aminotransferase subfamily. Homodimer. Requires pyridoxal 5'-phosphate as cofactor.

It catalyses the reaction (2S,6S)-2,6-diaminopimelate + 2-oxoglutarate = (S)-2,3,4,5-tetrahydrodipicolinate + L-glutamate + H2O + H(+). Its pathway is amino-acid biosynthesis; L-lysine biosynthesis via DAP pathway; LL-2,6-diaminopimelate from (S)-tetrahydrodipicolinate (aminotransferase route): step 1/1. Involved in the synthesis of meso-diaminopimelate (m-DAP or DL-DAP), required for both lysine and peptidoglycan biosynthesis. Catalyzes the direct conversion of tetrahydrodipicolinate to LL-diaminopimelate. This Prochlorococcus marinus subsp. pastoris (strain CCMP1986 / NIES-2087 / MED4) protein is LL-diaminopimelate aminotransferase.